The chain runs to 336 residues: Coproporphyrin III ferrochelatase (336 aa).

Fe-coproporphyrin III contacts are provided by serine 52 and tyrosine 116. The Fe(2+) site is built by histidine 176 and glutamate 259.

The protein belongs to the ferrochelatase family.

The protein localises to the cytoplasm. It carries out the reaction Fe-coproporphyrin III + 2 H(+) = coproporphyrin III + Fe(2+). The protein operates within porphyrin-containing compound metabolism; protoheme biosynthesis. In terms of biological role, involved in coproporphyrin-dependent heme b biosynthesis. Catalyzes the insertion of ferrous iron into coproporphyrin III to form Fe-coproporphyrin III. In Mycobacterium leprae (strain Br4923), this protein is Coproporphyrin III ferrochelatase.